We begin with the raw amino-acid sequence, 234 residues long: 7-cyano-7-deazaguanine synthase (234 aa).

An ATP-binding site is contributed by 7 to 17; the sequence is LSGGLDSAVCM. Zn(2+)-binding residues include Cys-197, Cys-208, Cys-211, and Cys-214.

Belongs to the QueC family. Zn(2+) serves as cofactor.

The enzyme catalyses 7-carboxy-7-deazaguanine + NH4(+) + ATP = 7-cyano-7-deazaguanine + ADP + phosphate + H2O + H(+). The protein operates within purine metabolism; 7-cyano-7-deazaguanine biosynthesis. Catalyzes the ATP-dependent conversion of 7-carboxy-7-deazaguanine (CDG) to 7-cyano-7-deazaguanine (preQ(0)). This Methanococcus aeolicus (strain ATCC BAA-1280 / DSM 17508 / OCM 812 / Nankai-3) protein is 7-cyano-7-deazaguanine synthase.